We begin with the raw amino-acid sequence, 264 residues long: Thymidylate synthase (264 aa).

R21 is a dUMP binding site. Position 51 (H51) interacts with (6R)-5,10-methylene-5,6,7,8-tetrahydrofolate. A dUMP-binding site is contributed by 126–127 (RR). C146 serves as the catalytic Nucleophile. DUMP is bound by residues 166 to 169 (RSAD), N177, and 207 to 209 (HLY). Position 169 (D169) interacts with (6R)-5,10-methylene-5,6,7,8-tetrahydrofolate. Position 263 (A263) interacts with (6R)-5,10-methylene-5,6,7,8-tetrahydrofolate.

It belongs to the thymidylate synthase family. Bacterial-type ThyA subfamily. As to quaternary structure, homodimer.

The protein resides in the cytoplasm. The catalysed reaction is dUMP + (6R)-5,10-methylene-5,6,7,8-tetrahydrofolate = 7,8-dihydrofolate + dTMP. It functions in the pathway pyrimidine metabolism; dTTP biosynthesis. Functionally, catalyzes the reductive methylation of 2'-deoxyuridine-5'-monophosphate (dUMP) to 2'-deoxythymidine-5'-monophosphate (dTMP) while utilizing 5,10-methylenetetrahydrofolate (mTHF) as the methyl donor and reductant in the reaction, yielding dihydrofolate (DHF) as a by-product. This enzymatic reaction provides an intracellular de novo source of dTMP, an essential precursor for DNA biosynthesis. This Legionella pneumophila subsp. pneumophila (strain Philadelphia 1 / ATCC 33152 / DSM 7513) protein is Thymidylate synthase.